Reading from the N-terminus, the 512-residue chain is MQGNVIHVDKLYKMMYTDNYETIKKYLEYTVIDKTENYSTSANLIPFIPLHQAIEARNIDIIKSIITVDNVNQPGHDDTYPIHIICKEPNMLAISYMLRSINQCSVFNTLVKIKDMFNYRNVEIAKIILTNRYKNIQDIDLKYIDKKSKDDIIEITKLLFSYGADINMVDRHGNSPLHYATENPDQRLTRLLLSKGANPNILNKTNKSPLYYSIESDNPDITMLLIDKFIFNNTDPILSHAIKHYRKPILHALIENGASINARDKYGNTPLHYAVSYCKDIDVIKLLLERGVDVNAKSYIRNLTPLHSSYLKSPRVLKLLLQYGADINSLDSYSLTPLTSVVLQYLCIECGRIVVSHICCLKRIKPDIENSLGFIDNIDAITSNKRLNQIRLKCEDELNRMASIKITNTYSFDVFVLCDNITLLCKLVNNSIIDDILINSFNIYKGIILKNIYRSRKRLYLIENTLYVLNNTFKPNYMWNRLPVELQNYIMEYIDDASLKVMHEYEKHKLKY.

ANK repeat units lie at residues I45 to Q73, D77 to V106, I136 to M168, H172 to I201, T205 to P236, L238 to A262, Y266 to A296, and R301 to S329.

The polypeptide is Putative ankyrin repeat protein FPV233 (Vertebrata (FPV)).